A 321-amino-acid polypeptide reads, in one-letter code: MNSENSFSSSEHITVLLHEAVNGLALKENGIYIDGTFGRGGHSRFILSQLSSNGRLIAVDRDPRAIAEAHKIQDLRFQIEHNSFSHIPEICDKLNLVGKIDGILLDLGVSSPQLDEAERGFSFMKDGPLDMRMDTTQGLSAEEWLKQVSIEDLTWVLKTFGEERFAKRIATAIVDFNKSAVKNGTEFLSRTSQLAELISQAVPFKDKHKHPATRSFQAIRIFINSELDELESLLNSALDMLAPEGRLSIISFHSLEDRMVKHFMKKQSKGEDIPKGLPLREDQIQRNQKLRIIGKAIQPSDAEIQANPRSRSAILRVAERI.

S-adenosyl-L-methionine contacts are provided by residues 40–42, aspartate 60, phenylalanine 84, aspartate 106, and glutamine 113; that span reads GGH.

It belongs to the methyltransferase superfamily. RsmH family.

Its subcellular location is the cytoplasm. It carries out the reaction cytidine(1402) in 16S rRNA + S-adenosyl-L-methionine = N(4)-methylcytidine(1402) in 16S rRNA + S-adenosyl-L-homocysteine + H(+). In terms of biological role, specifically methylates the N4 position of cytidine in position 1402 (C1402) of 16S rRNA. This Haemophilus influenzae (strain ATCC 51907 / DSM 11121 / KW20 / Rd) protein is Ribosomal RNA small subunit methyltransferase H.